A 279-amino-acid polypeptide reads, in one-letter code: Isopentenyl-diphosphate delta-isomerase idi1 (279 aa).

Lysine 78 is a substrate binding site. 2 residues coordinate Mg(2+): histidine 82 and histidine 93. A Nudix hydrolase domain is found at leucine 91 to leucine 249. Substrate-binding residues include glutamine 111 and lysine 116. Cysteine 128 is a catalytic residue. Serine 129 is a substrate binding site. The Nudix box signature appears at serine 129–glycine 162. Mg(2+)-binding residues include glutamate 191 and glutamate 193. The active site involves glutamate 193.

Belongs to the IPP isomerase type 1 family. The cofactor is Mg(2+).

The enzyme catalyses isopentenyl diphosphate = dimethylallyl diphosphate. It functions in the pathway isoprenoid biosynthesis; dimethylallyl diphosphate biosynthesis; dimethylallyl diphosphate from isopentenyl diphosphate: step 1/1. Functionally, isopentenyl-diphosphate delta-isomerase; part of the second module of ergosterol biosynthesis pathway that includes the middle steps of the pathway. Idi1 catalyzes the 1,3-allylic rearrangement of isopentenyl (IPP) to its highly electrophilic allylic isomer, dimethylallyl diphosphate (DMAPP). The second module is carried out in the vacuole and involves the formation of farnesyl diphosphate, which is also an important intermediate in the biosynthesis of ubiquinone, dolichol, heme and prenylated proteins. Activity by the mevalonate kinase erg12 (AFUA_4G07780) first converts mevalonate into 5-phosphomevalonate. 5-phosphomevalonate is then further converted to 5-diphosphomevalonate by the phosphomevalonate kinase erg8 (AFUA_5G10680). The diphosphomevalonate decarboxylase mvd1 (AFUA_4G07130) then produces isopentenyl diphosphate. The isopentenyl-diphosphate delta-isomerase idi1 (AFUA_6G11160) then catalyzes the 1,3-allylic rearrangement of the homoallylic substrate isopentenyl (IPP) to its highly electrophilic allylic isomer, dimethylallyl diphosphate (DMAPP). Finally the farnesyl diphosphate synthase erg20 (AFUA_5G02450) catalyzes the sequential condensation of isopentenyl pyrophosphate with dimethylallyl pyrophosphate, and then with the resultant geranylpyrophosphate to the ultimate product farnesyl pyrophosphate. The protein is Isopentenyl-diphosphate delta-isomerase idi1 of Aspergillus fumigatus (strain ATCC MYA-4609 / CBS 101355 / FGSC A1100 / Af293) (Neosartorya fumigata).